Reading from the N-terminus, the 229-residue chain is Ribosome maturation factor RimM (229 aa).

Residues 148-229 form the PRC barrel domain; that stretch reads ADEFYWVDLI…RVVVDWEADY (82 aa).

This sequence belongs to the RimM family. As to quaternary structure, binds ribosomal protein uS19.

The protein resides in the cytoplasm. An accessory protein needed during the final step in the assembly of 30S ribosomal subunit, possibly for assembly of the head region. Essential for efficient processing of 16S rRNA. May be needed both before and after RbfA during the maturation of 16S rRNA. It has affinity for free ribosomal 30S subunits but not for 70S ribosomes. The protein is Ribosome maturation factor RimM of Burkholderia pseudomallei (strain 1710b).